We begin with the raw amino-acid sequence, 67 residues long: Putative cytosolic sulfotransferase 2 (67 aa).

31–33 (RDG) contacts 3'-phosphoadenylyl sulfate.

It belongs to the sulfotransferase 1 family.

Its subcellular location is the cytoplasm. Sulfotransferase that utilizes 3'-phospho-5'-adenylyl sulfate (PAPS) as sulfonate donor. The protein is Putative cytosolic sulfotransferase 2 (SOT2) of Arabidopsis thaliana (Mouse-ear cress).